Here is a 100-residue protein sequence, read N- to C-terminus: Urease subunit gamma (100 aa).

This sequence belongs to the urease gamma subunit family. In terms of assembly, heterotrimer of UreA (gamma), UreB (beta) and UreC (alpha) subunits. Three heterotrimers associate to form the active enzyme.

The protein localises to the cytoplasm. The catalysed reaction is urea + 2 H2O + H(+) = hydrogencarbonate + 2 NH4(+). It functions in the pathway nitrogen metabolism; urea degradation; CO(2) and NH(3) from urea (urease route): step 1/1. This chain is Urease subunit gamma, found in Rhizobium rhizogenes (strain K84 / ATCC BAA-868) (Agrobacterium radiobacter).